The following is a 345-amino-acid chain: UDP-3-O-acylglucosamine N-acyltransferase (345 aa).

H239 (proton acceptor) is an active-site residue.

The protein belongs to the transferase hexapeptide repeat family. LpxD subfamily. Homotrimer.

The enzyme catalyses a UDP-3-O-[(3R)-3-hydroxyacyl]-alpha-D-glucosamine + a (3R)-hydroxyacyl-[ACP] = a UDP-2-N,3-O-bis[(3R)-3-hydroxyacyl]-alpha-D-glucosamine + holo-[ACP] + H(+). Its pathway is bacterial outer membrane biogenesis; LPS lipid A biosynthesis. In terms of biological role, catalyzes the N-acylation of UDP-3-O-acylglucosamine using 3-hydroxyacyl-ACP as the acyl donor. Is involved in the biosynthesis of lipid A, a phosphorylated glycolipid that anchors the lipopolysaccharide to the outer membrane of the cell. In Geobacter metallireducens (strain ATCC 53774 / DSM 7210 / GS-15), this protein is UDP-3-O-acylglucosamine N-acyltransferase.